A 362-amino-acid chain; its full sequence is MAVTITLKTLQQQTFKIRMEPDETVKVLKEKIEAEKGRDAFPVAGQKLIYAGKILSDDVPIRDYRIDEKNFVVVMVTKAKTSPGTSVPSEASPTATPESSTSFPSAPASGMSHPPPTAREDKSPSEESAPTTSPESVSGSVPSSGSGGREEDAASTLVTGSEYETMLTEIMSMGYERERVVAALRASYNNPHRAVEYLLTGIPGSPEPEHGSVQESQVSEQPSTEAGENPLEFLRDQPQFQNMRQVIQQNPALLPALLQQLGQENPQLLQQISRHQEQFIQMLNEPPGELVDISDVEGEVGAIGEEAPQMNYIQVTPQEKEAIERLKALGFPESLVIQAYFACEKNENLAANFLLSQNFDDE.

The Ubiquitin-like domain maps to 1-81; it reads MAVTITLKTL…VVVMVTKAKT (81 aa). Disordered stretches follow at residues 80-160 and 201-227; these read KTSP…LVTG and GIPGSPEPEHGSVQESQVSEQPSTEAG. Low complexity predominate over residues 88–109; the sequence is PSEASPTATPESSTSFPSAPAS. Lys122 participates in a covalent cross-link: Glycyl lysine isopeptide (Lys-Gly) (interchain with G-Cter in ubiquitin). Residues Ser123, Ser128, Ser133, Ser136, and Ser138 each carry the phosphoserine modification. Over residues 126 to 144 the composition is skewed to low complexity; it reads EESAPTTSPESVSGSVPSS. Positions 161 to 201 constitute a UBA 1 domain; that stretch reads SEYETMLTEIMSMGYERERVVAALRASYNNPHRAVEYLLTG. 3 positions are modified to phosphoserine: Ser205, Ser294, and Ser356. One can recognise a UBA 2 domain in the interval 317–357; sequence PQEKEAIERLKALGFPESLVIQAYFACEKNENLAANFLLSQ.

The protein belongs to the RAD23 family. Interacts with XPC; the interaction is suggesting the existence of a functional equivalent variant XPC complex. Interacts with PSMD4 and PSMC5. Interacts with ATXN3. Interacts with UBQLN2.

It is found in the nucleus. Its function is as follows. Multiubiquitin chain receptor involved in modulation of proteasomal degradation. Binds to 'Lys-48'-linked polyubiquitin chains in a length-dependent manner and with a lower affinity to 'Lys-63'-linked polyubiquitin chains. Proposed to be capable to bind simultaneously to the 26S proteasome and to polyubiquitinated substrates and to deliver ubiquitinated proteins to the proteasome. In terms of biological role, involved in nucleotide excision repair and is thought to be functional equivalent for RAD23B in global genome nucleotide excision repair (GG-NER) by association with XPC. In vitro, XPC:RAD23A dimer has NER activity. Can stabilize XPC. The chain is UV excision repair protein RAD23 homolog A (RAD23A) from Bos taurus (Bovine).